The sequence spans 400 residues: tRNA-specific 2-thiouridylase MnmA (400 aa).

Residues 19-26 and leucine 45 each bind ATP; that span reads AMSGGVDS. The active-site Nucleophile is cysteine 113. A disulfide bond links cysteine 113 and cysteine 210. Glycine 137 is an ATP binding site. Positions 160 to 162 are interaction with tRNA; sequence RDQ. Cysteine 210 serves as the catalytic Cysteine persulfide intermediate.

The protein belongs to the MnmA/TRMU family.

It is found in the cytoplasm. It carries out the reaction S-sulfanyl-L-cysteinyl-[protein] + uridine(34) in tRNA + AH2 + ATP = 2-thiouridine(34) in tRNA + L-cysteinyl-[protein] + A + AMP + diphosphate + H(+). In terms of biological role, catalyzes the 2-thiolation of uridine at the wobble position (U34) of tRNA, leading to the formation of s(2)U34. This is tRNA-specific 2-thiouridylase MnmA from Rhodopseudomonas palustris (strain BisB18).